The primary structure comprises 62 residues: MARVCAITGRKARSGNSRSHAMNATKRKWGANLQKVRVRIDGKVQRVYVSARALKSGKIERV.

The tract at residues 1 to 28 (MARVCAITGRKARSGNSRSHAMNATKRK) is disordered.

It belongs to the bacterial ribosomal protein bL28 family.

The chain is Large ribosomal subunit protein bL28 from Bacillus thuringiensis (strain Al Hakam).